Reading from the N-terminus, the 381-residue chain is Alkanesulfonate monooxygenase (381 aa).

This sequence belongs to the SsuD family. Homotetramer.

It carries out the reaction an alkanesulfonate + FMNH2 + O2 = an aldehyde + FMN + sulfite + H2O + 2 H(+). In terms of biological role, catalyzes the desulfonation of aliphatic sulfonates. In Escherichia coli O1:K1 / APEC, this protein is Alkanesulfonate monooxygenase.